The following is an 88-amino-acid chain: Small ribosomal subunit protein uS17 (88 aa).

The protein belongs to the universal ribosomal protein uS17 family. As to quaternary structure, part of the 30S ribosomal subunit.

In terms of biological role, one of the primary rRNA binding proteins, it binds specifically to the 5'-end of 16S ribosomal RNA. The sequence is that of Small ribosomal subunit protein uS17 from Lactobacillus gasseri (strain ATCC 33323 / DSM 20243 / BCRC 14619 / CIP 102991 / JCM 1131 / KCTC 3163 / NCIMB 11718 / NCTC 13722 / AM63).